Here is a 513-residue protein sequence, read N- to C-terminus: ATP synthase subunit alpha (513 aa).

169 to 176 (GDRQTGKT) is an ATP binding site.

The protein belongs to the ATPase alpha/beta chains family. In terms of assembly, F-type ATPases have 2 components, CF(1) - the catalytic core - and CF(0) - the membrane proton channel. CF(1) has five subunits: alpha(3), beta(3), gamma(1), delta(1), epsilon(1). CF(0) has three main subunits: a(1), b(2) and c(9-12). The alpha and beta chains form an alternating ring which encloses part of the gamma chain. CF(1) is attached to CF(0) by a central stalk formed by the gamma and epsilon chains, while a peripheral stalk is formed by the delta and b chains.

The protein resides in the cell inner membrane. It catalyses the reaction ATP + H2O + 4 H(+)(in) = ADP + phosphate + 5 H(+)(out). Functionally, produces ATP from ADP in the presence of a proton gradient across the membrane. The alpha chain is a regulatory subunit. This Shewanella sp. (strain ANA-3) protein is ATP synthase subunit alpha.